The chain runs to 294 residues: Protein RarD (294 aa).

Residues 1 to 11 (MDAKQTRQGVL) are Cytoplasmic-facing. The chain crosses the membrane as a helical span at residues 12 to 34 (LALAAYFIWGIAPAYFKLIYYVP). An EamA domain is found at 18–145 (FIWGIAPAYF…AVCGVLVQLW (128 aa)). Over 35 to 37 (ADE) the chain is Periplasmic. A helical transmembrane segment spans residues 38–60 (ILTHRVIWSFFFMVALLSVSRQW). The Cytoplasmic portion of the chain corresponds to 61-72 (RQVKRLLKTPKK). A helical transmembrane segment spans residues 73-95 (IFLLALSAVLVGGNWLLFIWAVN). The Periplasmic segment spans residues 96 to 99 (NHHM). The helical transmembrane segment at 100-122 (LEASLGYFINPLVNILLGMIFLG) threads the bilayer. Topologically, residues 123-128 (ERFRRM) are cytoplasmic. A helical membrane pass occupies residues 129 to 146 (QWLAVILAVCGVLVQLWT). At 147 to 149 (FGS) the chain is on the periplasmic side. A helical membrane pass occupies residues 150–167 (LPIIALGLAFSFAFYGLV). Residues 168-179 (RKKIAVEAQTGM) lie on the Cytoplasmic side of the membrane. Residues 180 to 197 (LVETLWLLPVAAIYLFGI) traverse the membrane as a helical segment. The Periplasmic segment spans residues 198–211 (ADSPTSHMGQNALS). A helical membrane pass occupies residues 212-234 (LNLLLMAAGVVTTIPLLCFTGAA). At 235–238 (TRLR) the chain is on the cytoplasmic side. Residues 239 to 261 (LSTLGFFQYIGPTLMFLLAVTFY) form a helical membrane-spanning segment. Residues 262 to 270 (GEVPGADKM) are Periplasmic-facing. Residues 271 to 290 (VTFAFIWVALAIFVMDAIYT) form a helical membrane-spanning segment. The Cytoplasmic segment spans residues 291-294 (QRKK).

Belongs to the EamA transporter family.

It is found in the cell inner membrane. This is Protein RarD (rarD) from Salmonella typhimurium (strain LT2 / SGSC1412 / ATCC 700720).